Here is a 344-residue protein sequence, read N- to C-terminus: UDP-3-O-acylglucosamine N-acyltransferase (344 aa).

His244 acts as the Proton acceptor in catalysis.

This sequence belongs to the transferase hexapeptide repeat family. LpxD subfamily. In terms of assembly, homotrimer.

It carries out the reaction a UDP-3-O-[(3R)-3-hydroxyacyl]-alpha-D-glucosamine + a (3R)-hydroxyacyl-[ACP] = a UDP-2-N,3-O-bis[(3R)-3-hydroxyacyl]-alpha-D-glucosamine + holo-[ACP] + H(+). Its pathway is bacterial outer membrane biogenesis; LPS lipid A biosynthesis. In terms of biological role, catalyzes the N-acylation of UDP-3-O-acylglucosamine using 3-hydroxyacyl-ACP as the acyl donor. Is involved in the biosynthesis of lipid A, a phosphorylated glycolipid that anchors the lipopolysaccharide to the outer membrane of the cell. This chain is UDP-3-O-acylglucosamine N-acyltransferase, found in Pseudoalteromonas atlantica (strain T6c / ATCC BAA-1087).